Reading from the N-terminus, the 448-residue chain is Trigger factor (448 aa).

One can recognise a PPIase FKBP-type domain in the interval G167–P253.

The protein belongs to the FKBP-type PPIase family. Tig subfamily.

The protein resides in the cytoplasm. The catalysed reaction is [protein]-peptidylproline (omega=180) = [protein]-peptidylproline (omega=0). Involved in protein export. Acts as a chaperone by maintaining the newly synthesized protein in an open conformation. Functions as a peptidyl-prolyl cis-trans isomerase. This is Trigger factor from Borrelia recurrentis (strain A1).